Reading from the N-terminus, the 742-residue chain is RING finger protein 145 homolog (742 aa).

Helical transmembrane passes span 109-129 (AAII…TLPL), 138-158 (HFLS…YVDL), 178-198 (HGFH…LLEV), 233-253 (ACTG…PSLI), 285-305 (ILEL…YVEL), 318-338 (ILLT…ALAV), 368-388 (SGYT…FLGM), 395-415 (ILLA…LFEI), 438-458 (ICIA…MLAL), 463-483 (IYTA…IGVI), and 533-553 (VKVG…IVNI). Residues 592-630 (CAICFIEMKEEARITPCKHYFHGPCLRKWLAVKMVCPLC) form an RING-type; atypical zinc finger. Disordered regions lie at residues 642 to 684 (KSSS…PGDM) and 722 to 742 (AYES…ENNN). The span at 659–672 (AAVEENPENPEEQP) shows a compositional bias: acidic residues.

It localises to the membrane. Its subcellular location is the golgi apparatus. It is found in the cis-Golgi network. The protein localises to the trans-Golgi network. It carries out the reaction S-ubiquitinyl-[E2 ubiquitin-conjugating enzyme]-L-cysteine + [acceptor protein]-L-lysine = [E2 ubiquitin-conjugating enzyme]-L-cysteine + N(6)-ubiquitinyl-[acceptor protein]-L-lysine.. E3 ubiquitin ligase that catalyzes the direct transfer of ubiquitin from E2 ubiquitin-conjugating enzyme to a specific substrate. Acting downstream of probable Golgi transport protein eas-1, involved in inhibition of activation of transcription factor sbp-1, thereby playing a role in regulating AMsh glial cell size. This is RING finger protein 145 homolog from Caenorhabditis elegans.